Reading from the N-terminus, the 298-residue chain is GTP cyclohydrolase FolE2 (298 aa).

This sequence belongs to the GTP cyclohydrolase IV family.

It catalyses the reaction GTP + H2O = 7,8-dihydroneopterin 3'-triphosphate + formate + H(+). The protein operates within cofactor biosynthesis; 7,8-dihydroneopterin triphosphate biosynthesis; 7,8-dihydroneopterin triphosphate from GTP: step 1/1. Functionally, converts GTP to 7,8-dihydroneopterin triphosphate. The sequence is that of GTP cyclohydrolase FolE2 from Neisseria meningitidis serogroup B (strain ATCC BAA-335 / MC58).